Consider the following 121-residue polypeptide: Large ribosomal subunit protein uL14 (121 aa).

It belongs to the universal ribosomal protein uL14 family. Part of the 50S ribosomal subunit. Forms a cluster with proteins L3 and L19. In the 70S ribosome, L14 and L19 interact and together make contacts with the 16S rRNA in bridges B5 and B8.

Its function is as follows. Binds to 23S rRNA. Forms part of two intersubunit bridges in the 70S ribosome. The protein is Large ribosomal subunit protein uL14 of Synechococcus sp. (strain CC9902).